A 338-amino-acid polypeptide reads, in one-letter code: Phenylalanine--tRNA ligase alpha subunit (338 aa).

Glutamate 253 is a binding site for Mg(2+).

The protein belongs to the class-II aminoacyl-tRNA synthetase family. Phe-tRNA synthetase alpha subunit type 1 subfamily. In terms of assembly, tetramer of two alpha and two beta subunits. Mg(2+) is required as a cofactor.

Its subcellular location is the cytoplasm. The enzyme catalyses tRNA(Phe) + L-phenylalanine + ATP = L-phenylalanyl-tRNA(Phe) + AMP + diphosphate + H(+). This is Phenylalanine--tRNA ligase alpha subunit from Trichlorobacter lovleyi (strain ATCC BAA-1151 / DSM 17278 / SZ) (Geobacter lovleyi).